We begin with the raw amino-acid sequence, 851 residues long: DNA mismatch repair protein MutS (851 aa).

602–609 (GPNMSGKS) is an ATP binding site.

Belongs to the DNA mismatch repair MutS family.

In terms of biological role, this protein is involved in the repair of mismatches in DNA. It is possible that it carries out the mismatch recognition step. This protein has a weak ATPase activity. The sequence is that of DNA mismatch repair protein MutS from Streptococcus pyogenes serotype M6 (strain ATCC BAA-946 / MGAS10394).